We begin with the raw amino-acid sequence, 438 residues long: uncharacterized protein (438 aa).

This is an uncharacterized protein from Methanocaldococcus jannaschii (strain ATCC 43067 / DSM 2661 / JAL-1 / JCM 10045 / NBRC 100440) (Methanococcus jannaschii).